A 401-amino-acid polypeptide reads, in one-letter code: 8-amino-7-oxononanoate synthase (401 aa).

Arg19 provides a ligand contact to substrate. 106–107 (GY) is a pyridoxal 5'-phosphate binding site. His131 provides a ligand contact to substrate. 3 residues coordinate pyridoxal 5'-phosphate: Ser176, His204, and Thr233. Lys236 carries the N6-(pyridoxal phosphate)lysine modification. Position 350 (Thr350) interacts with substrate.

The protein belongs to the class-II pyridoxal-phosphate-dependent aminotransferase family. BioF subfamily. As to quaternary structure, homodimer. Pyridoxal 5'-phosphate serves as cofactor.

The catalysed reaction is 6-carboxyhexanoyl-[ACP] + L-alanine + H(+) = (8S)-8-amino-7-oxononanoate + holo-[ACP] + CO2. Its pathway is cofactor biosynthesis; biotin biosynthesis. Catalyzes the decarboxylative condensation of pimeloyl-[acyl-carrier protein] and L-alanine to produce 8-amino-7-oxononanoate (AON), [acyl-carrier protein], and carbon dioxide. This chain is 8-amino-7-oxononanoate synthase, found in Pseudomonas aeruginosa (strain LESB58).